The following is a 366-amino-acid chain: S-adenosylmethionine:tRNA ribosyltransferase-isomerase (366 aa).

Belongs to the QueA family. In terms of assembly, monomer.

It is found in the cytoplasm. The enzyme catalyses 7-aminomethyl-7-carbaguanosine(34) in tRNA + S-adenosyl-L-methionine = epoxyqueuosine(34) in tRNA + adenine + L-methionine + 2 H(+). Its pathway is tRNA modification; tRNA-queuosine biosynthesis. In terms of biological role, transfers and isomerizes the ribose moiety from AdoMet to the 7-aminomethyl group of 7-deazaguanine (preQ1-tRNA) to give epoxyqueuosine (oQ-tRNA). The polypeptide is S-adenosylmethionine:tRNA ribosyltransferase-isomerase (Methylorubrum populi (strain ATCC BAA-705 / NCIMB 13946 / BJ001) (Methylobacterium populi)).